A 70-amino-acid polypeptide reads, in one-letter code: Large ribosomal subunit protein bL31 (70 aa).

Zn(2+)-binding residues include cysteine 16, cysteine 18, cysteine 37, and cysteine 40.

It belongs to the bacterial ribosomal protein bL31 family. Type A subfamily. In terms of assembly, part of the 50S ribosomal subunit. Zn(2+) is required as a cofactor.

Binds the 23S rRNA. This Erwinia tasmaniensis (strain DSM 17950 / CFBP 7177 / CIP 109463 / NCPPB 4357 / Et1/99) protein is Large ribosomal subunit protein bL31.